The primary structure comprises 258 residues: Adenylate kinase (258 aa).

52 to 57 (GAGKGT) is an ATP binding site. The interval 72–101 (ATGDMLRSQVAKKTELGKEAKKIMDQGGLV) is NMP. AMP-binding positions include threonine 73, arginine 78, 99–101 (GLV), 128–131 (GFPR), and glutamine 135. The interval 169-206 (GRLVHPASGRSYHKVFNPPKQEMKDDITGEPLIQRSDD) is LID. ATP is bound by residues arginine 170 and 179 to 180 (SY). AMP-binding residues include arginine 203 and arginine 214. Residue glutamine 242 coordinates ATP.

Belongs to the adenylate kinase family. AK2 subfamily. As to quaternary structure, monomer.

It localises to the cytoplasm. It is found in the cytosol. The protein localises to the mitochondrion intermembrane space. The enzyme catalyses AMP + ATP = 2 ADP. Catalyzes the reversible transfer of the terminal phosphate group between ATP and AMP. Plays an important role in cellular energy homeostasis and in adenine nucleotide metabolism. Adenylate kinase activity is critical for regulation of the phosphate utilization and the AMP de novo biosynthesis pathways. The protein is Adenylate kinase (adk1) of Aspergillus oryzae (strain ATCC 42149 / RIB 40) (Yellow koji mold).